The chain runs to 167 residues: Ribosome-binding factor A (167 aa).

Residues 127–167 (SRANAQYAGDADPYKHDEPDDDDFDDDDDVEVEDWDDDDEA) are disordered. A compositionally biased stretch (acidic residues) spans 145–167 (PDDDDFDDDDDVEVEDWDDDDEA).

This sequence belongs to the RbfA family. In terms of assembly, monomer. Binds 30S ribosomal subunits, but not 50S ribosomal subunits or 70S ribosomes.

Its subcellular location is the cytoplasm. One of several proteins that assist in the late maturation steps of the functional core of the 30S ribosomal subunit. Associates with free 30S ribosomal subunits (but not with 30S subunits that are part of 70S ribosomes or polysomes). Required for efficient processing of 16S rRNA. May interact with the 5'-terminal helix region of 16S rRNA. In Bifidobacterium adolescentis (strain ATCC 15703 / DSM 20083 / NCTC 11814 / E194a), this protein is Ribosome-binding factor A.